The sequence spans 252 residues: 3-deoxy-manno-octulosonate cytidylyltransferase (252 aa).

Belongs to the KdsB family.

The protein localises to the cytoplasm. The catalysed reaction is 3-deoxy-alpha-D-manno-oct-2-ulosonate + CTP = CMP-3-deoxy-beta-D-manno-octulosonate + diphosphate. It functions in the pathway nucleotide-sugar biosynthesis; CMP-3-deoxy-D-manno-octulosonate biosynthesis; CMP-3-deoxy-D-manno-octulosonate from 3-deoxy-D-manno-octulosonate and CTP: step 1/1. The protein operates within bacterial outer membrane biogenesis; lipopolysaccharide biosynthesis. Functionally, activates KDO (a required 8-carbon sugar) for incorporation into bacterial lipopolysaccharide in Gram-negative bacteria. In Vibrio campbellii (strain ATCC BAA-1116), this protein is 3-deoxy-manno-octulosonate cytidylyltransferase.